The primary structure comprises 283 residues: F-box only protein 27 (283 aa).

The interval 1–23 (MGASVSRGRAARVPAPEPEPEEA) is disordered. One can recognise an F-box domain in the interval 23-70 (ALDLSQLPPELLLVVLSHVPPRTLLGRCRQVCRGWRALVDGQALWLLI). The 177-residue stretch at 104–280 (FCARRPIGRN…VTNSSVIVRV (177 aa)) folds into the FBA domain.

Part of a SCF (SKP1-cullin-F-box) protein ligase complex. Interacts with SKP1 and CUL1. As to expression, predominantly expressed in brain, heart and kidney. Expressed at lower levels in liver and lung.

Its function is as follows. Substrate-recognition component of the SCF (SKP1-CUL1-F-box protein)-type E3 ubiquitin ligase complex. Able to recognize and bind denatured glycoproteins, which are modified with complex-type oligosaccharides. The chain is F-box only protein 27 (FBXO27) from Homo sapiens (Human).